We begin with the raw amino-acid sequence, 486 residues long: Glutamyl-tRNA(Gln) amidotransferase subunit A (486 aa).

Active-site charge relay system residues include K79 and S154. The active-site Acyl-ester intermediate is the S178.

Belongs to the amidase family. GatA subfamily. Heterotrimer of A, B and C subunits.

The catalysed reaction is L-glutamyl-tRNA(Gln) + L-glutamine + ATP + H2O = L-glutaminyl-tRNA(Gln) + L-glutamate + ADP + phosphate + H(+). Functionally, allows the formation of correctly charged Gln-tRNA(Gln) through the transamidation of misacylated Glu-tRNA(Gln) in organisms which lack glutaminyl-tRNA synthetase. The reaction takes place in the presence of glutamine and ATP through an activated gamma-phospho-Glu-tRNA(Gln). The polypeptide is Glutamyl-tRNA(Gln) amidotransferase subunit A (Myxococcus xanthus (strain DK1622)).